The primary structure comprises 307 residues: Phospho-N-acetylmuramoyl-pentapeptide-transferase (307 aa).

The next 10 helical transmembrane spans lie at 3–23 (IILFTSLVAFFVFLLILKYWI), 47–67 (SGTPVMGGIIFLIVSIPFLFF), 71–91 (FFPSLSTILFGLLGLLDDFKL), 105–125 (IFLSFIITLLLYIFSFHDYKI), 137–157 (IFYVILFFVVFIAVPNAINLT), 162–182 (GLAGGTSLITLFFFLIYNFQF), 186–206 (LTLEISLMITALIAFLWFNSH), 210–230 (IFMGDVGAFALGGFIASLSII), 237–257 (LVFLGGIFLIESLSVFIQVFF), and 285–305 (VVWRFYIIHLIMMIGGIILWN).

It belongs to the glycosyltransferase 4 family. MraY subfamily. Mg(2+) serves as cofactor.

It localises to the cell inner membrane. The enzyme catalyses UDP-N-acetyl-alpha-D-muramoyl-L-alanyl-gamma-D-glutamyl-meso-2,6-diaminopimeloyl-D-alanyl-D-alanine + di-trans,octa-cis-undecaprenyl phosphate = di-trans,octa-cis-undecaprenyl diphospho-N-acetyl-alpha-D-muramoyl-L-alanyl-D-glutamyl-meso-2,6-diaminopimeloyl-D-alanyl-D-alanine + UMP. Its pathway is cell wall biogenesis; peptidoglycan biosynthesis. In terms of biological role, catalyzes the initial step of the lipid cycle reactions in the biosynthesis of the cell wall peptidoglycan: transfers peptidoglycan precursor phospho-MurNAc-pentapeptide from UDP-MurNAc-pentapeptide onto the lipid carrier undecaprenyl phosphate, yielding undecaprenyl-pyrophosphoryl-MurNAc-pentapeptide, known as lipid I. The protein is Phospho-N-acetylmuramoyl-pentapeptide-transferase of Dictyoglomus turgidum (strain DSM 6724 / Z-1310).